The chain runs to 804 residues: DNA mismatch repair protein MutS (804 aa).

Residue 614–621 coordinates ATP; sequence GPNMAGKS.

It belongs to the DNA mismatch repair MutS family.

This protein is involved in the repair of mismatches in DNA. It is possible that it carries out the mismatch recognition step. This protein has a weak ATPase activity. The polypeptide is DNA mismatch repair protein MutS (Ehrlichia chaffeensis (strain ATCC CRL-10679 / Arkansas)).